Reading from the N-terminus, the 435-residue chain is Serine carboxypeptidase-like 14 (435 aa).

An N-terminal signal peptide occupies residues 1-23; that stretch reads MGSWIPKLLLLQLVLLLTKHADS. Cystine bridges form between Cys-82-Cys-325, Cys-246-Cys-260, and Cys-284-Cys-291. Residue Asn-103 is glycosylated (N-linked (GlcNAc...) asparagine). Residue Ser-178 is part of the active site. N-linked (GlcNAc...) asparagine glycosylation occurs at Asn-344. Asp-360 is an active-site residue. N-linked (GlcNAc...) asparagine glycosylation is present at Asn-376. Residue His-413 is part of the active site.

This sequence belongs to the peptidase S10 family. As to expression, expressed in senescent leaves.

The protein localises to the secreted. Probable carboxypeptidase. The protein is Serine carboxypeptidase-like 14 (SCPL14) of Arabidopsis thaliana (Mouse-ear cress).